The following is a 455-amino-acid chain: Serine--tRNA ligase (455 aa).

Residue 252–254 participates in L-serine binding; the sequence is TAE. ATP is bound by residues 283–285 and Val-299; that span reads RKE. Glu-306 serves as a coordination point for L-serine. Position 370 to 373 (370 to 373) interacts with ATP; sequence EVVS. Thr-406 provides a ligand contact to L-serine.

The protein belongs to the class-II aminoacyl-tRNA synthetase family. Type-1 seryl-tRNA synthetase subfamily. As to quaternary structure, homodimer. The tRNA molecule binds across the dimer.

The protein localises to the cytoplasm. The catalysed reaction is tRNA(Ser) + L-serine + ATP = L-seryl-tRNA(Ser) + AMP + diphosphate + H(+). The enzyme catalyses tRNA(Sec) + L-serine + ATP = L-seryl-tRNA(Sec) + AMP + diphosphate + H(+). Its pathway is aminoacyl-tRNA biosynthesis; selenocysteinyl-tRNA(Sec) biosynthesis; L-seryl-tRNA(Sec) from L-serine and tRNA(Sec): step 1/1. Catalyzes the attachment of serine to tRNA(Ser). Is also able to aminoacylate tRNA(Sec) with serine, to form the misacylated tRNA L-seryl-tRNA(Sec), which will be further converted into selenocysteinyl-tRNA(Sec). This Pyrococcus abyssi (strain GE5 / Orsay) protein is Serine--tRNA ligase.